Reading from the N-terminus, the 947-residue chain is Protein translocase subunit SecA 1 (947 aa).

ATP contacts are provided by residues Q83, 101–105 (GEGKT), and D490. The tract at residues 860-947 (AKAQEQTGQG…KTSKPTRRRG (88 aa)) is disordered. Basic and acidic residues predominate over residues 925 to 934 (TRRERREAAR). Positions 935–947 (KQAKTSKPTRRRG) are enriched in basic residues.

The protein belongs to the SecA family. In terms of assembly, monomer and homodimer. Part of the essential Sec protein translocation apparatus which comprises SecA, SecYEG and auxiliary proteins SecDF. Other proteins may also be involved.

It localises to the cell membrane. The protein localises to the cytoplasm. The catalysed reaction is ATP + H2O + cellular proteinSide 1 = ADP + phosphate + cellular proteinSide 2.. Part of the Sec protein translocase complex. Interacts with the SecYEG preprotein conducting channel. Has a central role in coupling the hydrolysis of ATP to the transfer of proteins into and across the cell membrane, serving as an ATP-driven molecular motor driving the stepwise translocation of polypeptide chains across the membrane. The chain is Protein translocase subunit SecA 1 from Mycobacterium sp. (strain JLS).